The chain runs to 309 residues: Calcium homeostasis modulator protein 5 (309 aa).

The Cytoplasmic portion of the chain corresponds to 1-15 (MDAFQSILKFFLNQK). The helical transmembrane segment at 16 to 37 (TAIGYSFMALLTVGSERLFSLV) threads the bilayer. A 1,2-diacyl-sn-glycero-3-phosphate-binding residues include Arg32 and Val37. Residues 38-45 (AFKCPCSV) lie on the Extracellular side of the membrane. Cystine bridges form between Cys41-Cys127, Cys43-Cys158, and Cys142-Cys149. Residues 46–70 (ENTAYGLVFLFAPAWVLLILGFFLN) form a helical membrane-spanning segment. Topologically, residues 71-99 (NKAWRLFTGCCMNPKKIFPRRRCCRFFYV) are cytoplasmic. A helical transmembrane segment spans residues 100–129 (LGHIILSSLVAPVMWLSVALLNGTFYECAM). Residue Asn121 coordinates a 1,2-diacyl-sn-glycero-3-phosphate. Over 130–174 (SGTRSTRLLEMICKGKPKECWEELHKVSCGKSSMAAMESEEVRLS) the chain is Extracellular. Residues 175–200 (LQAQSQILGWCLICSASFLSLLTTCY) traverse the membrane as a helical segment. Over 201–309 (ARCRSKVSYL…MILVGTAQSL (109 aa)) the chain is Cytoplasmic. Arg202 is a binding site for a 1,2-diacyl-sn-glycero-3-phosphate.

The protein belongs to the CALHM family. In terms of assembly, oligomerizes to form undecameric cone-shaped channels.

Its subcellular location is the membrane. In terms of biological role, may assemble to form large pore channels with gating and ion conductance likely regulated by membrane lipids. The protein is Calcium homeostasis modulator protein 5 of Mus musculus (Mouse).